A 71-amino-acid polypeptide reads, in one-letter code: Small ribosomal subunit protein bS21 (71 aa).

The protein belongs to the bacterial ribosomal protein bS21 family.

In Vesicomyosocius okutanii subsp. Calyptogena okutanii (strain HA), this protein is Small ribosomal subunit protein bS21.